Reading from the N-terminus, the 469-residue chain is Cysteine--tRNA ligase (469 aa).

Cys29 is a Zn(2+) binding site. The short motif at 31-41 (PTVYNYIHIGN) is the 'HIGH' region element. Positions 210, 235, and 239 each coordinate Zn(2+). The 'KMSKS' region motif lies at 267–271 (KMSKS). Lys270 lines the ATP pocket.

This sequence belongs to the class-I aminoacyl-tRNA synthetase family. As to quaternary structure, monomer. Zn(2+) serves as cofactor.

It localises to the cytoplasm. The enzyme catalyses tRNA(Cys) + L-cysteine + ATP = L-cysteinyl-tRNA(Cys) + AMP + diphosphate. The chain is Cysteine--tRNA ligase from Thermosipho africanus (strain TCF52B).